Consider the following 166-residue polypeptide: Ubiquitin-conjugating enzyme E2-18 kDa (166 aa).

Residues 5–165 (MALRRLMKEY…VRRLARKTLG (161 aa)) form the UBC core domain. Cys90 (glycyl thioester intermediate) is an active-site residue. Residue Cys90 forms a Glycyl cysteine thioester (Cys-Gly) (interchain with G-Cter in ubiquitin) linkage.

It belongs to the ubiquitin-conjugating enzyme family. Post-translationally, autoubiquitinated at Cys-90; undergoes 'Lys-48'-linked polyubiquitination, which leads to proteasome-dependent protein degradation.

It carries out the reaction S-ubiquitinyl-[E1 ubiquitin-activating enzyme]-L-cysteine + [E2 ubiquitin-conjugating enzyme]-L-cysteine = [E1 ubiquitin-activating enzyme]-L-cysteine + S-ubiquitinyl-[E2 ubiquitin-conjugating enzyme]-L-cysteine.. The protein operates within protein modification; protein ubiquitination. Functionally, catalyzes the covalent attachment of ubiquitin to other proteins. Functions in degradation of misfolded or regulated proteins localized in the endoplasmic reticulum (ER) lumen or membrane via the ubiquitin-proteasome system. Cognate E2 conjugating enzyme for the doa10 ubiquitin ligase complex, which is part of the ERAD-C pathway responsible for the rapid degradation of membrane proteins with misfolded cytoplasmic domains, and of the hrd1 ubiquitin ligase complex, which is part of the ERAD-L and ERAD-M pathways responsible for the rapid degradation of soluble lumenal and membrane proteins with misfolded lumenal domains (ERAD-L), or ER-membrane proteins with misfolded transmembrane domains (ERAD-M). Together with hrd1, required for the degradation of the transcription factor sre1 precursor in the absence of its binding partner scp1. Has a role in the formation of chromatin structures that influence the localization of transcriptional silencing factors. The protein is Ubiquitin-conjugating enzyme E2-18 kDa (ubc7) of Schizosaccharomyces pombe (strain 972 / ATCC 24843) (Fission yeast).